The sequence spans 165 residues: Putative tyrosine-protein phosphatase AMV078 (165 aa).

In terms of domain architecture, Tyrosine-protein phosphatase spans 2–149 (NISNINNDIY…LKFYNSYKNI (148 aa)). The Phosphocysteine intermediate role is filled by Cys-94.

It belongs to the protein-tyrosine phosphatase family. Non-receptor class dual specificity subfamily.

It carries out the reaction O-phospho-L-tyrosyl-[protein] + H2O = L-tyrosyl-[protein] + phosphate. The polypeptide is Putative tyrosine-protein phosphatase AMV078 (Amsacta moorei entomopoxvirus (AmEPV)).